Reading from the N-terminus, the 144-residue chain is uncharacterized protein (144 aa).

The signal sequence occupies residues 1 to 16 (MRKFLIVLLLPLLVLA).

This is an uncharacterized protein from Aquifex aeolicus (strain VF5).